The following is a 122-amino-acid chain: MVQPQSRVKVVDNSGAKEIVCIRVLGKGRNQLSNIGDIIIGVVKEAIPNTPLKKSDIVRAVVVRTRKGLKRKNGIYIRFDDNAAVIVNKENNPRGTRIFGPVARELRDKSFMKIVSLAPEVI.

This sequence belongs to the universal ribosomal protein uL14 family. In terms of assembly, part of the 50S ribosomal subunit.

It localises to the plastid. It is found in the chloroplast. Binds to 23S rRNA. This Bigelowiella natans (Pedinomonas minutissima) protein is Large ribosomal subunit protein uL14c (rpl14).